Reading from the N-terminus, the 334-residue chain is Ribosomal RNA small subunit methyltransferase C (334 aa).

The protein belongs to the methyltransferase superfamily. RsmC family. As to quaternary structure, monomer.

It is found in the cytoplasm. It carries out the reaction guanosine(1207) in 16S rRNA + S-adenosyl-L-methionine = N(2)-methylguanosine(1207) in 16S rRNA + S-adenosyl-L-homocysteine + H(+). Specifically methylates the guanine in position 1207 of 16S rRNA in the 30S particle. In Idiomarina loihiensis (strain ATCC BAA-735 / DSM 15497 / L2-TR), this protein is Ribosomal RNA small subunit methyltransferase C.